We begin with the raw amino-acid sequence, 311 residues long: Serine/threonine-protein phosphatase PP1-1 (311 aa).

Residues D53, H55, D82, and N114 each contribute to the Mn(2+) site. H115 functions as the Proton donor in the catalytic mechanism. Mn(2+) contacts are provided by H164 and H238.

This sequence belongs to the PPP phosphatase family. PP-6 (PP-V) subfamily. In terms of assembly, inactivated in a complex with phosphatase methylesterase PPE1 (PP2Ai). Interacts with phosphatase 2A activator RRD1, which can reactivate PP2Ai by dissociating the catalytic subunit from the complex. Forms a ternary complex with RRD1-TAP42. Mn(2+) serves as cofactor.

Its subcellular location is the cytoplasm. It carries out the reaction O-phospho-L-seryl-[protein] + H2O = L-seryl-[protein] + phosphate. The enzyme catalyses O-phospho-L-threonyl-[protein] + H2O = L-threonyl-[protein] + phosphate. Its function is as follows. Involved in the dephosphorylation of the large subunit of RNA polymerase II. Is required in late G1 for normal G1 cyclin expression, bud initiation and expression of certain genes that are periodically expressed during late G1. Associates with the SAP proteins in a cell cycle-dependent manner. The chain is Serine/threonine-protein phosphatase PP1-1 (SIT4) from Saccharomyces cerevisiae (strain ATCC 204508 / S288c) (Baker's yeast).